A 342-amino-acid chain; its full sequence is Inositol-tetrakisphosphate 1-kinase 5 (342 aa).

2 residues coordinate 1D-myo-inositol 1,3,4-trisphosphate: lysine 25 and lysine 67. 2 residues coordinate ATP: arginine 102 and lysine 154. Positions 165 and 197 each coordinate 1D-myo-inositol 1,3,4-trisphosphate. ATP contacts are provided by residues glutamine 186–lysine 197 and serine 212. The Mg(2+) site is built by aspartate 283, aspartate 298, and asparagine 300. Asparagine 300 is a binding site for 1D-myo-inositol 1,3,4-trisphosphate.

The protein belongs to the ITPK1 family. As to quaternary structure, monomer. It depends on Mg(2+) as a cofactor. Expressed in roots, leaves, flowers, anthers and embryos.

It carries out the reaction 1D-myo-inositol 3,4,5,6-tetrakisphosphate + ATP = 1D-myo-inositol 1,3,4,5,6-pentakisphosphate + ADP + H(+). It catalyses the reaction 1D-myo-inositol 1,3,4-trisphosphate + ATP = 1D-myo-inositol 1,3,4,5-tetrakisphosphate + ADP + H(+). The catalysed reaction is 1D-myo-inositol 1,3,4-trisphosphate + ATP = 1D-myo-inositol 1,3,4,6-tetrakisphosphate + ADP + H(+). In terms of biological role, kinase that can phosphorylate various inositol polyphosphate such as Ins(3,4,5,6)P4 or Ins(1,3,4)P3 and participates in phytic acid biosynthesis in developing seeds. Phytic acid is the primary storage form of phosphorus in cereal grains and other plant seeds. This chain is Inositol-tetrakisphosphate 1-kinase 5 (ITPK5), found in Oryza sativa subsp. japonica (Rice).